The primary structure comprises 122 residues: uncharacterized protein (122 aa).

This sequence belongs to the IIV-6 115R family.

This is an uncharacterized protein from Acheta domesticus (House cricket).